We begin with the raw amino-acid sequence, 95 residues long: Pyruvate dehydrogenase inhibitor (95 aa).

The protein belongs to the HesB/IscA family. In terms of assembly, interacts with the E1 module of pyruvate dehydrogenase (PdhA-PdhB).

Functionally, acts as an inhibitor of the pyruvate dehydrogenase. Overexpression does not affect growth with glucose as the main carbon source, but it leads to a dramatic growth defect when cells are grown with pyruvate as the sole carbon source. The sequence is that of Pyruvate dehydrogenase inhibitor from Bacillus subtilis (strain 168).